The primary structure comprises 216 residues: Imidazole glycerol phosphate synthase subunit HisH 1 (216 aa).

The region spanning 4–216 (CVLIVDAGLG…LQNFIALNPC (213 aa)) is the Glutamine amidotransferase type-1 domain. The active-site Nucleophile is the cysteine 84. Catalysis depends on residues histidine 195 and glutamate 197.

Heterodimer of HisH and HisF.

The protein resides in the cytoplasm. It carries out the reaction 5-[(5-phospho-1-deoxy-D-ribulos-1-ylimino)methylamino]-1-(5-phospho-beta-D-ribosyl)imidazole-4-carboxamide + L-glutamine = D-erythro-1-(imidazol-4-yl)glycerol 3-phosphate + 5-amino-1-(5-phospho-beta-D-ribosyl)imidazole-4-carboxamide + L-glutamate + H(+). It catalyses the reaction L-glutamine + H2O = L-glutamate + NH4(+). The protein operates within amino-acid biosynthesis; L-histidine biosynthesis; L-histidine from 5-phospho-alpha-D-ribose 1-diphosphate: step 5/9. In terms of biological role, IGPS catalyzes the conversion of PRFAR and glutamine to IGP, AICAR and glutamate. The HisH subunit provides the glutamine amidotransferase activity that produces the ammonia necessary to HisF for the synthesis of IGP and AICAR. The chain is Imidazole glycerol phosphate synthase subunit HisH 1 (hisH1) from Prochlorococcus marinus (strain MIT 9313).